The following is a 208-amino-acid chain: Methenyltetrahydrofolate cyclohydrolase (208 aa).

A helical membrane pass occupies residues 25–46; that stretch reads GAAAISGAMGAALVSMVCNLTI.

This sequence belongs to the cyclodeaminase/cyclohydrolase family. In terms of assembly, homodimer.

Its subcellular location is the membrane. The enzyme catalyses (6R)-5,10-methenyltetrahydrofolate + H2O = (6R)-10-formyltetrahydrofolate + H(+). Its pathway is one-carbon metabolism; formaldehyde assimilation via serine pathway. Its function is as follows. Required for both C1 and C2 metabolism. This chain is Methenyltetrahydrofolate cyclohydrolase (fchA), found in Methylorubrum extorquens (strain ATCC 14718 / DSM 1338 / JCM 2805 / NCIMB 9133 / AM1) (Methylobacterium extorquens).